The primary structure comprises 145 residues: Large ribosomal subunit protein uL11 (145 aa).

This sequence belongs to the universal ribosomal protein uL11 family. Part of the ribosomal stalk of the 50S ribosomal subunit. Interacts with L10 and the large rRNA to form the base of the stalk. L10 forms an elongated spine to which L12 dimers bind in a sequential fashion forming a multimeric L10(L12)X complex. In terms of processing, one or more lysine residues are methylated.

Its function is as follows. Forms part of the ribosomal stalk which helps the ribosome interact with GTP-bound translation factors. The chain is Large ribosomal subunit protein uL11 from Sulfurihydrogenibium sp. (strain YO3AOP1).